Consider the following 323-residue polypeptide: Lipoyl synthase (323 aa).

Residues cysteine 61, cysteine 66, cysteine 72, cysteine 87, cysteine 91, cysteine 94, and serine 300 each contribute to the [4Fe-4S] cluster site. Positions 73 to 289 (WDKKHATFMI…ETVAYSKGFL (217 aa)) constitute a Radical SAM core domain.

The protein belongs to the radical SAM superfamily. Lipoyl synthase family. The cofactor is [4Fe-4S] cluster.

Its subcellular location is the cytoplasm. It catalyses the reaction [[Fe-S] cluster scaffold protein carrying a second [4Fe-4S](2+) cluster] + N(6)-octanoyl-L-lysyl-[protein] + 2 oxidized [2Fe-2S]-[ferredoxin] + 2 S-adenosyl-L-methionine + 4 H(+) = [[Fe-S] cluster scaffold protein] + N(6)-[(R)-dihydrolipoyl]-L-lysyl-[protein] + 4 Fe(3+) + 2 hydrogen sulfide + 2 5'-deoxyadenosine + 2 L-methionine + 2 reduced [2Fe-2S]-[ferredoxin]. It participates in protein modification; protein lipoylation via endogenous pathway; protein N(6)-(lipoyl)lysine from octanoyl-[acyl-carrier-protein]: step 2/2. Catalyzes the radical-mediated insertion of two sulfur atoms into the C-6 and C-8 positions of the octanoyl moiety bound to the lipoyl domains of lipoate-dependent enzymes, thereby converting the octanoylated domains into lipoylated derivatives. The polypeptide is Lipoyl synthase (Rhizobium leguminosarum bv. trifolii (strain WSM2304)).